We begin with the raw amino-acid sequence, 161 residues long: Large ribosomal subunit protein uL23m (161 aa).

A mitochondrion-targeting transit peptide spans 1–34 (MSKIAGKRLVYFPNITFTLCRGLNLQPKFAVFRV).

Belongs to the universal ribosomal protein uL23 family. In terms of assembly, component of the mitochondrial large ribosomal subunit (mt-LSU). Mature yeast 74S mitochondrial ribosomes consist of a small (37S) and a large (54S) subunit. The 37S small subunit contains a 15S ribosomal RNA (15S mt-rRNA) and at least 32 different proteins. The 54S large subunit contains a 21S rRNA (21S mt-rRNA) and at least 45 different proteins. uL23m forms the wall of the exit tunnel. Interacts with the C-terminus of OXA1.

The protein localises to the mitochondrion. Its function is as follows. Component of the mitochondrial ribosome (mitoribosome), a dedicated translation machinery responsible for the synthesis of mitochondrial genome-encoded proteins, including at least some of the essential transmembrane subunits of the mitochondrial respiratory chain. The mitoribosomes are attached to the mitochondrial inner membrane and translation products are cotranslationally integrated into the membrane. The polypeptide is Large ribosomal subunit protein uL23m (mrp20) (Schizosaccharomyces pombe (strain 972 / ATCC 24843) (Fission yeast)).